We begin with the raw amino-acid sequence, 264 residues long: Probable transcriptional regulatory protein PPA1157 (264 aa).

It belongs to the TACO1 family.

Its subcellular location is the cytoplasm. This chain is Probable transcriptional regulatory protein PPA1157, found in Cutibacterium acnes (strain DSM 16379 / KPA171202) (Propionibacterium acnes).